The chain runs to 128 residues: Aspartate 1-decarboxylase (128 aa).

Ser25 (schiff-base intermediate with substrate; via pyruvic acid) is an active-site residue. A Pyruvic acid (Ser) modification is found at Ser25. Thr57 contributes to the substrate binding site. The active-site Proton donor is the Tyr58. Gly73 to Ala75 provides a ligand contact to substrate.

This sequence belongs to the PanD family. In terms of assembly, heterooctamer of four alpha and four beta subunits. The cofactor is pyruvate. In terms of processing, is synthesized initially as an inactive proenzyme, which is activated by self-cleavage at a specific serine bond to produce a beta-subunit with a hydroxyl group at its C-terminus and an alpha-subunit with a pyruvoyl group at its N-terminus.

Its subcellular location is the cytoplasm. The enzyme catalyses L-aspartate + H(+) = beta-alanine + CO2. Its pathway is cofactor biosynthesis; (R)-pantothenate biosynthesis; beta-alanine from L-aspartate: step 1/1. Functionally, catalyzes the pyruvoyl-dependent decarboxylation of aspartate to produce beta-alanine. The sequence is that of Aspartate 1-decarboxylase from Paraburkholderia xenovorans (strain LB400).